The primary structure comprises 378 residues: MNVWLNMLTTTGLGAIIGGYTNHLAIKMLFRPHRPIYIGKFRVPFTPGLIPKRRDELAVQLGKMVVDHLLTAEGIGKKLTDENFQREMIQWAQIEVDKLLMNERSLRDVLEKWELAHVEEKAVQEIEEMLMKKVDTFVSKYYTYTWEQALPQFVHEKVEEMIPKAATFILTRGTQFFESDEGKARLQKMIDDFFASRGTLLNIVGMFLGNVSVVDRVQPEVIKFLQQEGTKQLLRDVLQKEWQKFKGREVKELASFIEKEMIVKYIVSTTKTRDIVSGFLNQSVQKICEPVRTNIVETLVPNIVQKGLTWGVNNTAHILKRFRLAEVVQQEVSTFSTERLEELVLSITKNELKMITYLGALLGGTIGLMQGILLLFLM.

A helical transmembrane segment spans residues 358 to 378 (LGALLGGTIGLMQGILLLFLM).

Belongs to the UPF0754 family.

The protein localises to the cell membrane. This chain is UPF0754 membrane protein Bcer98_0694, found in Bacillus cytotoxicus (strain DSM 22905 / CIP 110041 / 391-98 / NVH 391-98).